Here is a 155-residue protein sequence, read N- to C-terminus: Ribosomal RNA large subunit methyltransferase H (155 aa).

S-adenosyl-L-methionine contacts are provided by residues Leu72, Gly103, and 122–127; that span reads LSKLTM.

It belongs to the RNA methyltransferase RlmH family. In terms of assembly, homodimer.

It is found in the cytoplasm. The enzyme catalyses pseudouridine(1915) in 23S rRNA + S-adenosyl-L-methionine = N(3)-methylpseudouridine(1915) in 23S rRNA + S-adenosyl-L-homocysteine + H(+). Specifically methylates the pseudouridine at position 1915 (m3Psi1915) in 23S rRNA. This chain is Ribosomal RNA large subunit methyltransferase H, found in Methylobacillus flagellatus (strain ATCC 51484 / DSM 6875 / VKM B-1610 / KT).